We begin with the raw amino-acid sequence, 326 residues long: Ribonuclease Z (326 aa).

Residues histidine 62, histidine 64, aspartate 66, histidine 67, histidine 140, aspartate 211, and histidine 269 each coordinate Zn(2+). The active-site Proton acceptor is the aspartate 66.

The protein belongs to the RNase Z family. Homodimer. The cofactor is Zn(2+).

The enzyme catalyses Endonucleolytic cleavage of RNA, removing extra 3' nucleotides from tRNA precursor, generating 3' termini of tRNAs. A 3'-hydroxy group is left at the tRNA terminus and a 5'-phosphoryl group is left at the trailer molecule.. Its function is as follows. Zinc phosphodiesterase, which displays some tRNA 3'-processing endonuclease activity. Probably involved in tRNA maturation, by removing a 3'-trailer from precursor tRNA. The sequence is that of Ribonuclease Z from Synechocystis sp. (strain ATCC 27184 / PCC 6803 / Kazusa).